The following is a 415-amino-acid chain: MGEEKSLLQFRSFPSLKTSDFALTEEPSWRLENNVSSNRRRGNKRSGGVFTNFASLSVAIRRDRRESTFNGRNGGGGGAFASVSVVIPKEEDEFAPTSAQLLKNPIALLSIVPKDAALFFAGAFAGAAAKSVTAPLDRIKLLMQTHGVRAGQQSAKKAIGFIEAITLIGKEEGIKGYWKGNLPQVIRIVPYSAVQLFAYETYKKLFRGKDGQLSVLGRLGAGACAGMTSTLITYPLDVLRLRLAVEPGYRTMSQVALNMLREEGVASFYNGLGPSLLSIAPYIAINFCVFDLVKKSLPEKYQQKTQSSLLTAVVAAAIATGTCYPLDTIRRQMQLKGTPYKSVLDAFSGIIAREGVVGLYRGFVPNALKSMPNSSIKLTTFDIVKKLIAASEKEIQRIADDNRKKASPNTIDEQT.

The transit peptide at 1–61 directs the protein to the chloroplast; it reads MGEEKSLLQF…NFASLSVAIR (61 aa). The next 5 membrane-spanning stretches (helical) occupy residues 106 to 126, 182 to 207, 219 to 239, 273 to 293, and 309 to 329; these read IALL…AFAG, LPQV…KLFR, LGAG…LDVL, GPSL…FDLV, and LLTA…LDTI. Solcar repeat units follow at residues 113–205, 213–296, and 307–387; these read PKDA…YKKL, LSVL…VKKS, and SSLL…VKKL. Residue Arg187 participates in ADP binding. Position 330 (Arg330) interacts with ADP. A helical transmembrane segment spans residues 362–388; the sequence is GFVPNALKSMPNSSIKLTTFDIVKKLI.

Belongs to the mitochondrial carrier (TC 2.A.29) family. In terms of tissue distribution, highly expressed in developing photosynthetic organs such as leaves, flower buds and green siliques. Also detected in roots, flowers, mature leaves and stems.

It is found in the plastid. It localises to the chloroplast thylakoid membrane. Its subcellular location is the chloroplast envelope. Its activity is regulated as follows. KM and Vmax values toward ATP only are increased by m-chlorocarbonyl cyanide phenylhydrazone (CCCP). The corresponding values for ADP are not affected. Its function is as follows. Specifically transports adenine nucleotides. Involved in the uptake of ATP into thylakoids in exchange for lumenal ADP. The protein is Thylakoid ADP,ATP carrier protein, chloroplastic (TAAC) of Arabidopsis thaliana (Mouse-ear cress).